Reading from the N-terminus, the 154-residue chain is Minor structural pilin EpdC (154 aa).

A propeptide spanning residues 1–13 is cleaved from the precursor; sequence MIKMLQLPFNKKG. A QXSXEXXXL motif is present at residues 14–24; sequence QVSFDFIIAML.

The N-terminus is cleaved by the prepilin peptidase EppA, which recognizes the class III signal sequence.

The protein resides in the secreted. Its subcellular location is the cell surface. It is found in the fimbrium. Functionally, minor component of the type IV-like pili. Essential for pili formation. The chain is Minor structural pilin EpdC from Methanococcus maripaludis (strain DSM 14266 / JCM 13030 / NBRC 101832 / S2 / LL).